A 388-amino-acid chain; its full sequence is Pepsin A-1 (388 aa).

Residues 1–15 (MKWLLLLGLVALSEC) form the signal peptide. 2 propeptides (activation peptide) span residues 16–40 (IIYKVPLVRKKSLRRNLSEHGLLKD) and 41–62 (FLKKHNLNPASKYFPQAEAPTL). Residues 76–385 (YFGTIGIGTP…DRANNQVGLA (310 aa)) form the Peptidase A1 domain. The active site involves D94. Residues C107 and C112 are joined by a disulfide bond. Residue S130 is modified to Phosphoserine. C268 and C272 are joined by a disulfide. D277 is an active-site residue. C311 and C344 are disulfide-bonded.

Belongs to the peptidase A1 family. In terms of processing, each pepsinogen is converted to corresponding pepsin at pH 2.0 in part as a result of the release of a 47 AA activation segment and in part as a result of stepwise proteolytic cleavage via an intermediate form(s).

The protein resides in the secreted. The enzyme catalyses Preferential cleavage: hydrophobic, preferably aromatic, residues in P1 and P1' positions. Cleaves 1-Phe-|-Val-2, 4-Gln-|-His-5, 13-Glu-|-Ala-14, 14-Ala-|-Leu-15, 15-Leu-|-Tyr-16, 16-Tyr-|-Leu-17, 23-Gly-|-Phe-24, 24-Phe-|-Phe-25 and 25-Phe-|-Tyr-26 bonds in the B chain of insulin.. Functionally, shows particularly broad specificity; although bonds involving phenylalanine and leucine are preferred, many others are also cleaved to some extent. The sequence is that of Pepsin A-1 (PGA) from Macaca fuscata fuscata (Japanese macaque).